A 428-amino-acid polypeptide reads, in one-letter code: Septin homolog spn7 (428 aa).

The 276-residue stretch at 15–290 folds into the Septin-type G domain; the sequence is KGKKLRIMVA…ENYRTEKLSN (276 aa). The segment at 25–32 is G1 motif; it reads GSSYTSYQ. GTP contacts are provided by residues 25-32, Gly86, 166-174, and Gly224; these read GSSYTSYQ and NSNAFTEEE. The tract at residues 83–86 is G3 motif; it reads EVNG. Residues 165–168 are G4 motif; sequence GNSN. Disordered stretches follow at residues 287–345 and 387–414; these read KLSN…SEEL and KEFP…KKMD. Over residues 290–307 the composition is skewed to polar residues; sequence NDSPSNTSLSLQKQNSIV. Residues 309–325 show a composition bias toward basic and acidic residues; the sequence is NEDKRSVNGSERTETRS. Polar residues-rich tracts occupy residues 326–339 and 392–405; these read SIDQ…VSDS and RTTS…NNTT.

It belongs to the TRAFAC class TrmE-Era-EngA-EngB-Septin-like GTPase superfamily. Septin GTPase family. As to quaternary structure, component of the sporulation-specific septin complex composed of at least spn2, spn5, spn6 and spn7.

It localises to the cytoplasm. It is found in the nucleus. The protein resides in the forespore membrane. Septin-like protein involved in the correct orientation of forespore membrane extension during sporulation. Binds phosphatidylinositol 4-phosphate. The protein is Septin homolog spn7 (spn7) of Schizosaccharomyces pombe (strain 972 / ATCC 24843) (Fission yeast).